The sequence spans 403 residues: Palmitoyltransferase ZDHHC23-A (403 aa).

Over 1 to 70 (MKRERFKPPE…ADRLGVSCCT (70 aa)) the chain is Cytoplasmic. Residues 71-91 (VGPLRLELSVLPPMVLIPGLL) form a helical membrane-spanning segment. R92 is a topological domain (lumenal). The chain crosses the membrane as a helical span at residues 93-113 (VAAINCLLGVIILTALPLLVL). Residues 114–125 (WYYYMTHRRKRR) are Cytoplasmic-facing. The helical transmembrane segment at 126–146 (TLFFLSLALFSLAYMYYLFLT) threads the bilayer. Over 147-153 (EIVPRGD) the chain is Lumenal. The helical transmembrane segment at 154–174 (VTHLQVVTATTGMMLTLISLV) threads the bilayer. Residues 175–268 (RTKQGPGFVK…NSCVGQANHR (94 aa)) lie on the Cytoplasmic side of the membrane. The DHHC domain maps to 225 to 275 (KKCPVCQLVRPPRAGHCRICGACVLRMDHHCVWINSCVGQANHRQFILTLL). The active-site S-palmitoyl cysteine intermediate is C255. The chain crosses the membrane as a helical span at residues 269–289 (QFILTLLLFLLTSFYGISLVL). Residues 290 to 319 (RSICPKQSLFTAMLYCPGVYNQYSTALCFT) are Lumenal-facing. The chain crosses the membrane as a helical span at residues 320 to 340 (CVWYSVIITGGLLHLFILQII). The Cytoplasmic segment spans residues 341–403 (NVSCNVTERE…GSSLNLTDMV (63 aa)).

This sequence belongs to the DHHC palmitoyltransferase family.

It is found in the golgi apparatus membrane. The protein resides in the golgi apparatus. Its subcellular location is the trans-Golgi network membrane. It catalyses the reaction L-cysteinyl-[protein] + hexadecanoyl-CoA = S-hexadecanoyl-L-cysteinyl-[protein] + CoA. Functionally, palmitoyltransferase that could catalyze the addition of palmitate onto various protein substrates and be involved in a variety of cellular processes. The chain is Palmitoyltransferase ZDHHC23-A (zdhhc23a) from Danio rerio (Zebrafish).